Here is a 459-residue protein sequence, read N- to C-terminus: Protein phosphatase 1M (459 aa).

The span at 1–10 (MSAGWFRRRF) shows a compositional bias: basic residues. The interval 1–64 (MSAGWFRRRF…SRPVRSPARG (64 aa)) is disordered. Over residues 14-27 (EPLPAPRPPGPHAS) the composition is skewed to pro residues. A compositionally biased stretch (low complexity) spans 38 to 48 (RGSSSSPGAAD). Mn(2+)-binding residues include Asp125 and Gly126. One can recognise a PPM-type phosphatase domain in the interval 162–459 (MHLNGRCICP…HSQGQESSDH (298 aa)).

Belongs to the PP2C family. Mg(2+) serves as cofactor. Requires Mn(2+) as cofactor.

It localises to the nucleus. It carries out the reaction O-phospho-L-seryl-[protein] + H2O = L-seryl-[protein] + phosphate. The enzyme catalyses O-phospho-L-threonyl-[protein] + H2O = L-threonyl-[protein] + phosphate. This chain is Protein phosphatase 1M (PPM1M), found in Homo sapiens (Human).